The sequence spans 90 residues: Large ribosomal subunit protein uL23c (90 aa).

This sequence belongs to the universal ribosomal protein uL23 family. As to quaternary structure, part of the 50S ribosomal subunit.

It is found in the plastid. Its subcellular location is the chloroplast. Its function is as follows. Binds to 23S rRNA. The chain is Large ribosomal subunit protein uL23c (rpl23) from Psilotum nudum (Whisk fern).